A 299-amino-acid chain; its full sequence is Hemolysin C homolog (299 aa).

2 consecutive CBS domains span residues 80 to 142 (MVPR…NGRL) and 145 to 202 (LIRK…IDDE).

Belongs to the UPF0053 family. Hemolysin C subfamily.

This chain is Hemolysin C homolog (tlyC), found in Rickettsia rickettsii (strain Sheila Smith).